The following is a 338-amino-acid chain: Peroxidase 15 (338 aa).

A signal peptide spans 1 to 22; it reads MARIGSFLIILYLIYALTLCIC. 4 disulfides stabilise this stretch: Cys45–Cys125, Cys78–Cys83, Cys131–Cys332, and Cys210–Cys242. The active-site Proton acceptor is the His76. Ca(2+) contacts are provided by Asp77, Val80, Gly82, Asp84, and Ser86. Pro173 provides a ligand contact to substrate. The N-linked (GlcNAc...) asparagine glycan is linked to Asn176. Position 203 (His203) interacts with heme b. Thr204 is a Ca(2+) binding site. Residues Asn219 and Asn250 are each glycosylated (N-linked (GlcNAc...) asparagine). Residues Asp255, Ser258, and Asp263 each coordinate Ca(2+).

This sequence belongs to the peroxidase family. Classical plant (class III) peroxidase subfamily. Requires heme b as cofactor. Ca(2+) is required as a cofactor.

It localises to the secreted. The enzyme catalyses 2 a phenolic donor + H2O2 = 2 a phenolic radical donor + 2 H2O. Functionally, removal of H(2)O(2), oxidation of toxic reductants, biosynthesis and degradation of lignin, suberization, auxin catabolism, response to environmental stresses such as wounding, pathogen attack and oxidative stress. These functions might be dependent on each isozyme/isoform in each plant tissue. The polypeptide is Peroxidase 15 (PER15) (Arabidopsis thaliana (Mouse-ear cress)).